The sequence spans 884 residues: Protein argonaute-4 (884 aa).

One can recognise a PAZ domain in the interval 242–361; that stretch reads PVIEFMCEVL…LPLEVCNIVA (120 aa). Positions 532–843 constitute a Piwi domain; that stretch reads LIVVILPGKT…VAFRARYHLV (312 aa). The tract at residues 848–870 is disordered; sequence DSAEGSHVSGQSNGRDPQALAKA.

The protein belongs to the argonaute family. Ago subfamily.

It is found in the cytoplasm. The protein localises to the P-body. Functionally, required for RNA-mediated gene silencing (RNAi). Binds to short RNAs such as microRNAs (miRNAs) and represses the translation of mRNAs which are complementary to them. Lacks endonuclease activity and does not appear to cleave target mRNAs. The protein is Protein argonaute-4 (ago4) of Xenopus laevis (African clawed frog).